The primary structure comprises 382 residues: Sphingoid long-chain base transporter RSB1 (382 aa).

Topologically, residues 1-34 (MSNATNNTLGSLLPQLEAAANSNSLYGGMVPNLR) are extracellular. Residues asparagine 3 and asparagine 6 are each glycosylated (N-linked (GlcNAc...) asparagine). Residues 35-55 (FNITMIVIWGILLTIHVVQLL) form a helical membrane-spanning segment. Residues 56 to 57 (MR) lie on the Cytoplasmic side of the membrane. The chain crosses the membrane as a helical span at residues 58 to 78 (QYWFSIAFICTGILEVLGFIG). The Extracellular portion of the chain corresponds to 79–90 (RTWSHSNVADMD). Residues 91–111 (AFLLNMICLTIAPVFTMGGIY) form a helical membrane-spanning segment. The Cytoplasmic segment spans residues 112 to 135 (YQLAKLIEVYGHRFSLLPSPMAYS). A helical membrane pass occupies residues 136 to 156 (FIFICSDIVSLVVQAVGGGLC). Residues 157–171 (GVAVTDGTSTTTGNH) lie on the Extracellular side of the membrane. The helical transmembrane segment at 172–192 (VFIAGLAIQVASMAIFLMLWF) threads the bilayer. Residues 193-241 (HFLFRIYISVRWEHINSRPISLSLLKISQTEVDYLYREKFHFLRLEPKR) are Cytoplasmic-facing. Residues 242-262 (WVFHYFNLAMTVAVLTIFTRC) form a helical membrane-spanning segment. The Extracellular segment spans residues 263 to 281 (CYRLAELVVGWDGYLITHE). A helical membrane pass occupies residues 282-302 (WYFIILDALMMAIATVTLTIF). Residues 303–382 (HPGFAFKGRS…LFSSKKKAKL (80 aa)) are Cytoplasmic-facing.

The protein belongs to the lipid-translocating exporter (LTE) (TC 9.A.26.1) family.

The protein resides in the cell membrane. In terms of biological role, catalyzes the ATP-dependent translocation of sphingoid long-chain bases (LCBs) from the cytoplasmic site toward the extracytoplasmic side of the membrane (flip-flop). Involved in the establishment of the functional lipid asymmetry of the plasma membrane. Regulates intracellular levels of LCBs, sphingolipid precursors that are growth inhibitory at increased levels. This Saccharomyces cerevisiae (strain RM11-1a) (Baker's yeast) protein is Sphingoid long-chain base transporter RSB1 (RSB1).